Reading from the N-terminus, the 439-residue chain is tRNA modification GTPase MnmE (439 aa).

(6S)-5-formyl-5,6,7,8-tetrahydrofolate contacts are provided by Arg-20, Glu-78, and Lys-116. A TrmE-type G domain is found at 211-364 (GIYVAILGEP…LLSAIQKKVE (154 aa)). GTP contacts are provided by residues 221–226 (NSGKST), 240–246 (SEYAGTT), and 265–268 (DTAG). 2 residues coordinate Mg(2+): Ser-225 and Thr-246. (6S)-5-formyl-5,6,7,8-tetrahydrofolate is bound at residue Lys-439.

It belongs to the TRAFAC class TrmE-Era-EngA-EngB-Septin-like GTPase superfamily. TrmE GTPase family. As to quaternary structure, homodimer. Heterotetramer of two MnmE and two MnmG subunits. K(+) serves as cofactor.

The protein localises to the cytoplasm. Exhibits a very high intrinsic GTPase hydrolysis rate. Involved in the addition of a carboxymethylaminomethyl (cmnm) group at the wobble position (U34) of certain tRNAs, forming tRNA-cmnm(5)s(2)U34. The sequence is that of tRNA modification GTPase MnmE from Ehrlichia ruminantium (strain Welgevonden).